The sequence spans 2523 residues: Non-reducing polyketide synthase Preu3 (2523 aa).

Residues 58–247 (LQSLASERRA…KILAMTGSFH (190 aa)) form an N-terminal acylcarrier protein transacylase domain (SAT) region. Residues 373 to 792 (DNAVAVVGMA…GSNGAMIVCQ (420 aa)) form the Ketosynthase family 3 (KS3) domain. Residues cysteine 539, histidine 674, and histidine 715 each act as for beta-ketoacyl synthase activity in the active site. The interval 900–1207 (CFGGQVKAFV…KAFGSLADAT (308 aa)) is malonyl-CoA:ACP transacylase (MAT) domain. The active-site For acyl/malonyl transferase activity is the serine 986. An N-terminal hotdog fold region spans residues 1271-1398 (HELLTFSSFE…GLVAFGGTVE (128 aa)). One can recognise a PKS/mFAS DH domain in the interval 1271–1573 (HELLTFSSFE…FTRVTVPGLR (303 aa)). Residues 1301–1568 (LVKGHAVVAQ…ALGCRFTRVT (268 aa)) are product template (PT) domain. The active-site Proton acceptor; for dehydratase activity is histidine 1305. The segment at 1421–1573 (ECDALRGSAT…FTRVTVPGLR (153 aa)) is C-terminal hotdog fold. Aspartate 1483 functions as the Proton donor; for dehydratase activity in the catalytic mechanism. Residues 1579–1601 (ANGDARAQERPSGSRISPSPLAP) form a disordered region. Residues 1639-1713 (VDYLAQVKAL…KLAEYLAKTL (75 aa)) enclose the Carrier domain. O-(pantetheine 4'-phosphoryl)serine is present on serine 1673. Residues 1735-1757 (DAEQSSDESPYDSTDDSASGYGD) are disordered. Positions 1738–1749 (QSSDESPYDSTD) are enriched in acidic residues. The interval 1986-2085 (LEIGGGTGGT…MRQLLSSEGF (100 aa)) is methyltransferase (CMeT) domain. Positions 2218–2520 (LILHGGGHVL…RALEWLVEQC (303 aa)) are thioesterase (TE) domain.

It depends on pantetheine 4'-phosphate as a cofactor.

It carries out the reaction 3 malonyl-CoA + acetyl-CoA + S-adenosyl-L-methionine + H(+) = 3-methylorsellinate + S-adenosyl-L-homocysteine + 3 CO2 + 4 CoA. Non-reducing polyketide synthase; part of a gene cluster that mediates the biosynthesis of a yet unidentified natural product. The first step in the pathway is performed by Preu3 that condenses one acetyl-CoA starter unit with 3 malonyl-CoA units. Preu3 also catalyzes one methylation step to produce 3-methylorsellinate, an intermediate that exhibits significant antibacterial activities against methicillin-resistant Staphylococcus aureus, multidrug-resistant Enterococcus faecalis, multidrug-resistant Enterococcus faecium, and multidrug-resistant Staphylococcus epidermidis. This chain is Non-reducing polyketide synthase Preu3, found in Preussia isomera (Coprophilous fungus).